We begin with the raw amino-acid sequence, 365 residues long: Peptide chain release factor 2 (365 aa).

Gln251 carries the N5-methylglutamine modification.

This sequence belongs to the prokaryotic/mitochondrial release factor family. Post-translationally, methylated by PrmC. Methylation increases the termination efficiency of RF2.

It is found in the cytoplasm. Its function is as follows. Peptide chain release factor 2 directs the termination of translation in response to the peptide chain termination codons UGA and UAA. This is Peptide chain release factor 2 from Campylobacter jejuni subsp. jejuni serotype O:2 (strain ATCC 700819 / NCTC 11168).